The sequence spans 31 residues: Potassium channel toxin alpha-KTx 19.2 (31 aa).

3 cysteine pairs are disulfide-bonded: Cys-3/Cys-22, Cys-8/Cys-27, and Cys-12/Cys-29.

The protein belongs to the short scorpion toxin superfamily. Potassium channel inhibitor family. Alpha-KTx 19 subfamily. In terms of assembly, monomer. As to expression, expressed by the venom gland.

The protein localises to the secreted. Blocks voltage-gated potassium channels rKv1.1/KCNA1, rKv1.2/KCNA2, hKv1.3/KCNA3, rKv1.6/KCNA6 (IC(50)=75.9 nM) and, to a lesser extent, Shaker IR (with the inactivation domain removed). The protein is Potassium channel toxin alpha-KTx 19.2 of Buthus occitanus tunetanus (Common European scorpion).